Reading from the N-terminus, the 390-residue chain is GTPase Obg (390 aa).

An Obg domain is found at 1 to 159 (MKFVDEAVVK…REIRLELLLL (159 aa)). Residues 160-333 (ADVGMLGLPN…LCYKLADFME (174 aa)) enclose the OBG-type G domain. GTP is bound by residues 166–173 (GLPNAGKS), 191–195 (FTTLI), 213–216 (DIPG), 283–286 (NKVD), and 314–316 (SAI). The Mg(2+) site is built by Ser-173 and Thr-193. The span at 367 to 382 (TEDDDDWDDWDDEEDD) shows a compositional bias: acidic residues. Residues 367 to 390 (TEDDDDWDDWDDEEDDGHVVYVRD) form a disordered region.

Belongs to the TRAFAC class OBG-HflX-like GTPase superfamily. OBG GTPase family. As to quaternary structure, monomer. The cofactor is Mg(2+).

It localises to the cytoplasm. In terms of biological role, an essential GTPase which binds GTP, GDP and possibly (p)ppGpp with moderate affinity, with high nucleotide exchange rates and a fairly low GTP hydrolysis rate. Plays a role in control of the cell cycle, stress response, ribosome biogenesis and in those bacteria that undergo differentiation, in morphogenesis control. The protein is GTPase Obg of Vibrio parahaemolyticus serotype O3:K6 (strain RIMD 2210633).